A 479-amino-acid chain; its full sequence is Shugoshin (479 aa).

Residues 36-76 (SLRIRSLESEVSNLLSENVSLREQIITLTQELERFEAARTL) are a coiled coil. Disordered stretches follow at residues 109–145 (SRAVRENGEPAPARQSRESGPKEVDDTDPEPNLGFLD), 220–247 (EHSLPPNLETRRKKKIGPATVNKDQADT), and 263–479 (AKRK…SMPP). A compositionally biased stretch (basic and acidic residues) spans 123–132 (QSRESGPKEV). Residues 270-286 (EDDESLFESSPSEDDEF) are compositionally biased toward acidic residues. Polar residues-rich tracts occupy residues 290-303 (RPAQSPKLFSQNEH) and 318-328 (QSPTLSSQNDH). 2 stretches are compositionally biased toward basic and acidic residues: residues 335-352 (PQSERSIAHVHGERRVLE) and 379-388 (GYNEKSEKPL). Polar residues predominate over residues 400–411 (KNASPKKSSTRT).

The protein belongs to the shugoshin family.

It is found in the nucleus. The protein localises to the chromosome. Its subcellular location is the centromere. Plays a central role in chromosome cohesion during cell division by preventing premature dissociation of cohesin complex from centromeres after prophase, when most of cohesin complex dissociates from chromosomes arms. This is Shugoshin (sgo1) from Emericella nidulans (strain FGSC A4 / ATCC 38163 / CBS 112.46 / NRRL 194 / M139) (Aspergillus nidulans).